The primary structure comprises 178 residues: Large ribosomal subunit protein uL6 (178 aa).

This sequence belongs to the universal ribosomal protein uL6 family. As to quaternary structure, part of the 50S ribosomal subunit.

Its function is as follows. This protein binds to the 23S rRNA, and is important in its secondary structure. It is located near the subunit interface in the base of the L7/L12 stalk, and near the tRNA binding site of the peptidyltransferase center. The polypeptide is Large ribosomal subunit protein uL6 (Campylobacter fetus subsp. fetus (strain 82-40)).